The chain runs to 549 residues: uncharacterized protein (549 aa).

12 helical membrane passes run 27–47, 108–128, 146–166, 197–217, 233–253, 265–285, 308–328, 352–372, 399–419, 434–454, 472–492, and 501–521; these read ILRF…YVFV, PIVV…GVIF, TGLV…LAIA, AVAI…IPML, FIAI…FLLV, VAAI…LISL, FLVI…LSIL, LVLL…IFGV, TLLV…VGLG, LMLA…VAIG, IVSL…FQAI, and IFIW…VLIG.

It is found in the cell membrane. This is an uncharacterized protein from Mycoplasma pneumoniae (strain ATCC 29342 / M129 / Subtype 1) (Mycoplasmoides pneumoniae).